A 232-amino-acid polypeptide reads, in one-letter code: 2-C-methyl-D-erythritol 4-phosphate cytidylyltransferase (232 aa).

The protein belongs to the IspD/TarI cytidylyltransferase family. IspD subfamily.

It carries out the reaction 2-C-methyl-D-erythritol 4-phosphate + CTP + H(+) = 4-CDP-2-C-methyl-D-erythritol + diphosphate. The protein operates within isoprenoid biosynthesis; isopentenyl diphosphate biosynthesis via DXP pathway; isopentenyl diphosphate from 1-deoxy-D-xylulose 5-phosphate: step 2/6. Its function is as follows. Catalyzes the formation of 4-diphosphocytidyl-2-C-methyl-D-erythritol from CTP and 2-C-methyl-D-erythritol 4-phosphate (MEP). This chain is 2-C-methyl-D-erythritol 4-phosphate cytidylyltransferase, found in Rhodococcus erythropolis (strain PR4 / NBRC 100887).